A 584-amino-acid polypeptide reads, in one-letter code: Alpha-glucosidase MAL32 (584 aa).

The active-site Nucleophile is the aspartate 214. The active-site Proton donor is the glutamate 276.

The protein belongs to the glycosyl hydrolase 13 family.

It catalyses the reaction Hydrolysis of terminal, non-reducing (1-&gt;4)-linked alpha-D-glucose residues with release of alpha-D-glucose.. The protein is Alpha-glucosidase MAL32 (MAL32) of Saccharomyces cerevisiae (strain ATCC 204508 / S288c) (Baker's yeast).